The sequence spans 507 residues: uncharacterized protein (507 aa).

Over residues 1 to 12 (MEKSISSISKAS) the composition is skewed to low complexity. Positions 1–20 (MEKSISSISKASMNSDEKLD) are disordered. 12 helical membrane passes run 57–74 (FDFR…FNAL), 100–120 (IMIS…SYLY), 126–146 (ARIL…QAAV), 157–177 (WFLG…LTTF), 189–209 (IFYA…YGVF), 221–241 (YLFL…FLVL), 283–303 (VFKH…GVPL), 326–346 (LMTV…AFIS), 353–373 (GIVL…YGSI), 379–399 (IGVS…SSVL), 416–436 (VFTS…ANIF), and 445–465 (VPAL…VASI).

The protein belongs to the major facilitator superfamily. Allantoate permease family.

The protein resides in the endoplasmic reticulum. The protein localises to the membrane. This is an uncharacterized protein from Schizosaccharomyces pombe (strain 972 / ATCC 24843) (Fission yeast).